Reading from the N-terminus, the 456-residue chain is Putrescine--pyruvate aminotransferase (456 aa).

Tyr-156 is a binding site for substrate. Pyridoxal 5'-phosphate is bound at residue Asp-262. An N6-(pyridoxal phosphate)lysine modification is found at Lys-291. Substrate contacts are provided by Gly-322 and Arg-417.

It belongs to the class-III pyridoxal-phosphate-dependent aminotransferase family. Requires pyridoxal 5'-phosphate as cofactor.

It carries out the reaction putrescine + pyruvate = 4-aminobutanal + L-alanine. Its pathway is amine and polyamine degradation; putrescine degradation; 4-aminobutanal from putrescine (transaminase route). Involved in the putrescine catabolism. Catalyzes the transfer of the amino group from putrescine to pyruvate to yield 4-aminobutanal and alanine. This chain is Putrescine--pyruvate aminotransferase, found in Pseudomonas aeruginosa (strain ATCC 15692 / DSM 22644 / CIP 104116 / JCM 14847 / LMG 12228 / 1C / PRS 101 / PAO1).